A 323-amino-acid polypeptide reads, in one-letter code: tRNA U34 carboxymethyltransferase (323 aa).

Residues Lys-91, Trp-105, Lys-110, Gly-130, 152-154, 181-182, Met-196, Tyr-200, and Arg-315 each bind carboxy-S-adenosyl-L-methionine; these read DPT and IE.

Belongs to the class I-like SAM-binding methyltransferase superfamily. CmoB family. Homotetramer.

It carries out the reaction carboxy-S-adenosyl-L-methionine + 5-hydroxyuridine(34) in tRNA = 5-carboxymethoxyuridine(34) in tRNA + S-adenosyl-L-homocysteine + H(+). In terms of biological role, catalyzes carboxymethyl transfer from carboxy-S-adenosyl-L-methionine (Cx-SAM) to 5-hydroxyuridine (ho5U) to form 5-carboxymethoxyuridine (cmo5U) at position 34 in tRNAs. The polypeptide is tRNA U34 carboxymethyltransferase (Escherichia coli O157:H7).